The primary structure comprises 197 residues: Peptide deformylase (197 aa).

Positions 106 and 148 each coordinate Fe cation. The active site involves glutamate 149. Histidine 152 lines the Fe cation pocket.

Belongs to the polypeptide deformylase family. Requires Fe(2+) as cofactor.

It carries out the reaction N-terminal N-formyl-L-methionyl-[peptide] + H2O = N-terminal L-methionyl-[peptide] + formate. Removes the formyl group from the N-terminal Met of newly synthesized proteins. Requires at least a dipeptide for an efficient rate of reaction. N-terminal L-methionine is a prerequisite for activity but the enzyme has broad specificity at other positions. The chain is Peptide deformylase from Mycolicibacterium gilvum (strain PYR-GCK) (Mycobacterium gilvum (strain PYR-GCK)).